The sequence spans 559 residues: 2-isopropylmalate synthase (559 aa).

The 275-residue stretch at 33-307 (PIWCSSDLRD…NPDLDFSDID (275 aa)) folds into the Pyruvate carboxyltransferase domain. Residues Asp42, His246, His248, and Asn282 each coordinate Mg(2+). Residues 439–559 (ANTPYALVSH…SLSQPEAKAA (121 aa)) are regulatory domain.

This sequence belongs to the alpha-IPM synthase/homocitrate synthase family. LeuA type 2 subfamily. Homodimer. Requires Mg(2+) as cofactor.

The protein resides in the cytoplasm. The catalysed reaction is 3-methyl-2-oxobutanoate + acetyl-CoA + H2O = (2S)-2-isopropylmalate + CoA + H(+). The protein operates within amino-acid biosynthesis; L-leucine biosynthesis; L-leucine from 3-methyl-2-oxobutanoate: step 1/4. Its function is as follows. Catalyzes the condensation of the acetyl group of acetyl-CoA with 3-methyl-2-oxobutanoate (2-ketoisovalerate) to form 3-carboxy-3-hydroxy-4-methylpentanoate (2-isopropylmalate). The sequence is that of 2-isopropylmalate synthase from Pseudomonas fluorescens (strain Pf0-1).